We begin with the raw amino-acid sequence, 531 residues long: Light-independent protochlorophyllide reductase subunit B (531 aa).

Asp-36 contributes to the [4Fe-4S] cluster binding site. The active-site Proton donor is the Asp-287. 422–423 (GL) contributes to the substrate binding site.

Belongs to the ChlB/BchB/BchZ family. Protochlorophyllide reductase is composed of three subunits; BchL, BchN and BchB. Forms a heterotetramer of two BchB and two BchN subunits. [4Fe-4S] cluster serves as cofactor.

The catalysed reaction is chlorophyllide a + oxidized 2[4Fe-4S]-[ferredoxin] + 2 ADP + 2 phosphate = protochlorophyllide a + reduced 2[4Fe-4S]-[ferredoxin] + 2 ATP + 2 H2O. It participates in porphyrin-containing compound metabolism; bacteriochlorophyll biosynthesis (light-independent). Its function is as follows. Component of the dark-operative protochlorophyllide reductase (DPOR) that uses Mg-ATP and reduced ferredoxin to reduce ring D of protochlorophyllide (Pchlide) to form chlorophyllide a (Chlide). This reaction is light-independent. The NB-protein (BchN-BchB) is the catalytic component of the complex. This chain is Light-independent protochlorophyllide reductase subunit B, found in Rhodopseudomonas palustris (strain BisA53).